Consider the following 215-residue polypeptide: Probable GTP-binding protein EngB (215 aa).

The EngB-type G domain occupies 30 to 204; it reads TGIEVAFAGR…RQKLDTWFSE (175 aa). GTP-binding positions include 38–45, 65–69, 83–86, 150–153, and 183–185; these read GRSNAGKS, GRTQL, DLPG, TKAD, and FSS. Mg(2+) contacts are provided by serine 45 and threonine 67.

It belongs to the TRAFAC class TrmE-Era-EngA-EngB-Septin-like GTPase superfamily. EngB GTPase family. The cofactor is Mg(2+).

In terms of biological role, necessary for normal cell division and for the maintenance of normal septation. The polypeptide is Probable GTP-binding protein EngB (Escherichia coli O1:K1 / APEC).